The following is a 387-amino-acid chain: Deoxyhypusine synthase (387 aa).

Residues 108–112, 134–136, Glu140, and Asp257 each bind NAD(+); these read SNLIS and SAG. Residue 139-140 participates in spermidine binding; sequence EE. Residue Asp262 coordinates spermidine. Gly304 is an NAD(+) binding site. His309 lines the spermidine pocket. 329–330 lines the NAD(+) pocket; sequence TG. Spermidine contacts are provided by residues 335-337 and 344-350; these read GSD and EAVSWGK. Catalysis depends on Lys350, which acts as the Nucleophile. 363 to 364 lines the NAD(+) pocket; the sequence is DV.

The protein belongs to the deoxyhypusine synthase family. Homotetramer. The cofactor is NAD(+).

The catalysed reaction is [eIF5A protein]-L-lysine + spermidine = [eIF5A protein]-deoxyhypusine + propane-1,3-diamine. It functions in the pathway protein modification; eIF5A hypusination. Its function is as follows. Catalyzes the NAD-dependent oxidative cleavage of spermidine and the subsequent transfer of the butylamine moiety of spermidine to the epsilon-amino group of a specific lysine residue of the eIF-5A precursor protein to form the intermediate deoxyhypusine residue. This chain is Deoxyhypusine synthase, found in Saccharomyces cerevisiae (strain ATCC 204508 / S288c) (Baker's yeast).